Reading from the N-terminus, the 119-residue chain is Ethylene-responsive proteinase inhibitor 1 (119 aa).

The signal sequence occupies residues Met1–Ala27. Residues Gln28–Gln48 constitute a propeptide that is removed on maturation.

The protein belongs to the protease inhibitor I13 (potato type I serine protease inhibitor) family.

The protein resides in the secreted. This is Ethylene-responsive proteinase inhibitor 1 from Solanum lycopersicum (Tomato).